The following is a 203-amino-acid chain: Acireductone dioxygenase 3 (203 aa).

Positions 96, 98, 102, and 141 each coordinate Fe(2+). Residues histidine 96, histidine 98, glutamate 102, and histidine 141 each coordinate Ni(2+).

The protein belongs to the acireductone dioxygenase (ARD) family. Fe(2+) serves as cofactor. The cofactor is Ni(2+).

It localises to the cytoplasm. The protein localises to the nucleus. It catalyses the reaction 1,2-dihydroxy-5-(methylsulfanyl)pent-1-en-3-one + O2 = 4-methylsulfanyl-2-oxobutanoate + formate + 2 H(+). The enzyme catalyses 1,2-dihydroxy-5-(methylsulfanyl)pent-1-en-3-one + O2 = 3-(methylsulfanyl)propanoate + CO + formate + 2 H(+). Its pathway is amino-acid biosynthesis; L-methionine biosynthesis via salvage pathway; L-methionine from S-methyl-5-thio-alpha-D-ribose 1-phosphate: step 5/6. Catalyzes 2 different reactions between oxygen and the acireductone 1,2-dihydroxy-3-keto-5-methylthiopentene (DHK-MTPene) depending upon the metal bound in the active site. Fe-containing acireductone dioxygenase (Fe-ARD) produces formate and 2-keto-4-methylthiobutyrate (KMTB), the alpha-ketoacid precursor of methionine in the methionine recycle pathway. Ni-containing acireductone dioxygenase (Ni-ARD) produces methylthiopropionate, carbon monoxide and formate, and does not lie on the methionine recycle pathway. The chain is Acireductone dioxygenase 3 from Physcomitrium patens (Spreading-leaved earth moss).